Here is a 179-residue protein sequence, read N- to C-terminus: Large ribosomal subunit protein uL5 (179 aa).

The protein belongs to the universal ribosomal protein uL5 family. In terms of assembly, part of the 50S ribosomal subunit; part of the 5S rRNA/L5/L18/L25 subcomplex. Contacts the 5S rRNA and the P site tRNA. Forms a bridge to the 30S subunit in the 70S ribosome.

Its function is as follows. This is one of the proteins that bind and probably mediate the attachment of the 5S RNA into the large ribosomal subunit, where it forms part of the central protuberance. In the 70S ribosome it contacts protein S13 of the 30S subunit (bridge B1b), connecting the 2 subunits; this bridge is implicated in subunit movement. Contacts the P site tRNA; the 5S rRNA and some of its associated proteins might help stabilize positioning of ribosome-bound tRNAs. This Neisseria meningitidis serogroup C (strain 053442) protein is Large ribosomal subunit protein uL5.